The primary structure comprises 682 residues: DNA-directed RNA polymerase subunit beta' (682 aa).

Cysteine 69, cysteine 71, cysteine 87, and cysteine 90 together coordinate Zn(2+). Aspartate 489, aspartate 491, and aspartate 493 together coordinate Mg(2+).

This sequence belongs to the RNA polymerase beta' chain family. RpoC1 subfamily. In terms of assembly, in plastids the minimal PEP RNA polymerase catalytic core is composed of four subunits: alpha, beta, beta', and beta''. When a (nuclear-encoded) sigma factor is associated with the core the holoenzyme is formed, which can initiate transcription. Mg(2+) is required as a cofactor. Requires Zn(2+) as cofactor.

The protein localises to the plastid. Its subcellular location is the chloroplast. The enzyme catalyses RNA(n) + a ribonucleoside 5'-triphosphate = RNA(n+1) + diphosphate. Its function is as follows. DNA-dependent RNA polymerase catalyzes the transcription of DNA into RNA using the four ribonucleoside triphosphates as substrates. This is DNA-directed RNA polymerase subunit beta' from Platanus occidentalis (Sycamore).